The sequence spans 393 residues: Bifunctional enzyme IspD/IspF (393 aa).

Residues 1-234 (MTISQRTAAI…ARLAAQLGDI (234 aa)) form a 2-C-methyl-D-erythritol 4-phosphate cytidylyltransferase region. A 2-C-methyl-D-erythritol 2,4-cyclodiphosphate synthase region spans residues 235–393 (RTGTGYDVHA…SATIRLPWSA (159 aa)). 2 residues coordinate a divalent metal cation: D241 and H243. 4-CDP-2-C-methyl-D-erythritol 2-phosphate is bound by residues 241 to 243 (DVH) and 267 to 268 (HS). An a divalent metal cation-binding site is contributed by H275. Residues 289–291 (DIG), 365–368 (TTSE), F372, and R375 each bind 4-CDP-2-C-methyl-D-erythritol 2-phosphate.

In the N-terminal section; belongs to the IspD/TarI cytidylyltransferase family. IspD subfamily. This sequence in the C-terminal section; belongs to the IspF family. It depends on a divalent metal cation as a cofactor.

It catalyses the reaction 2-C-methyl-D-erythritol 4-phosphate + CTP + H(+) = 4-CDP-2-C-methyl-D-erythritol + diphosphate. The enzyme catalyses 4-CDP-2-C-methyl-D-erythritol 2-phosphate = 2-C-methyl-D-erythritol 2,4-cyclic diphosphate + CMP. It functions in the pathway isoprenoid biosynthesis; isopentenyl diphosphate biosynthesis via DXP pathway; isopentenyl diphosphate from 1-deoxy-D-xylulose 5-phosphate: step 2/6. It participates in isoprenoid biosynthesis; isopentenyl diphosphate biosynthesis via DXP pathway; isopentenyl diphosphate from 1-deoxy-D-xylulose 5-phosphate: step 4/6. Its function is as follows. Bifunctional enzyme that catalyzes the formation of 4-diphosphocytidyl-2-C-methyl-D-erythritol from CTP and 2-C-methyl-D-erythritol 4-phosphate (MEP) (IspD), and catalyzes the conversion of 4-diphosphocytidyl-2-C-methyl-D-erythritol 2-phosphate (CDP-ME2P) to 2-C-methyl-D-erythritol 2,4-cyclodiphosphate (ME-CPP) with a corresponding release of cytidine 5-monophosphate (CMP) (IspF). The protein is Bifunctional enzyme IspD/IspF of Bradyrhizobium sp. (strain BTAi1 / ATCC BAA-1182).